Consider the following 77-residue polypeptide: U-actitoxin-Avd12a (77 aa).

A signal peptide spans 1–23 (MALFRMLFLCAVLVLLTSKEGMS). Residues 24–29 (YEEPEN) constitute a propeptide that is removed on maturation. The EGF-like domain maps to 31–73 (EGVACTGQYAESFCLNGGTCRYIQSIGEYYCICNGDYTGHRCE). Intrachain disulfides connect C35-C50, C44-C61, and C63-C72.

Belongs to the EGF domain peptide family.

It localises to the secreted. It is found in the nematocyst. Has both toxic and EGF activity. Its EGF activity consists of rounding cells (morphological change) and inducing tyrosine phosphorylation of the EGFR in A431 cells, but with a lower potency that human EGF. The protein is U-actitoxin-Avd12a of Anemonia viridis (Snakelocks anemone).